A 62-amino-acid polypeptide reads, in one-letter code: Large ribosomal subunit protein bL28 (62 aa).

The tract at residues M1–L22 is disordered.

Belongs to the bacterial ribosomal protein bL28 family.

This Staphylococcus aureus (strain N315) protein is Large ribosomal subunit protein bL28.